Here is an 89-residue protein sequence, read N- to C-terminus: Small ribosomal subunit protein uS15 (89 aa).

This sequence belongs to the universal ribosomal protein uS15 family. In terms of assembly, part of the 30S ribosomal subunit. Forms a bridge to the 50S subunit in the 70S ribosome, contacting the 23S rRNA.

Functionally, one of the primary rRNA binding proteins, it binds directly to 16S rRNA where it helps nucleate assembly of the platform of the 30S subunit by binding and bridging several RNA helices of the 16S rRNA. Forms an intersubunit bridge (bridge B4) with the 23S rRNA of the 50S subunit in the ribosome. This Roseobacter denitrificans (strain ATCC 33942 / OCh 114) (Erythrobacter sp. (strain OCh 114)) protein is Small ribosomal subunit protein uS15.